We begin with the raw amino-acid sequence, 264 residues long: Indole-3-glycerol phosphate synthase (264 aa).

Belongs to the TrpC family.

It carries out the reaction 1-(2-carboxyphenylamino)-1-deoxy-D-ribulose 5-phosphate + H(+) = (1S,2R)-1-C-(indol-3-yl)glycerol 3-phosphate + CO2 + H2O. Its pathway is amino-acid biosynthesis; L-tryptophan biosynthesis; L-tryptophan from chorismate: step 4/5. This Polaromonas sp. (strain JS666 / ATCC BAA-500) protein is Indole-3-glycerol phosphate synthase.